We begin with the raw amino-acid sequence, 527 residues long: Peptide chain release factor 3 (527 aa).

One can recognise a tr-type G domain in the interval 9–278; it reads NKRRTFAIIS…GLTQWAPKPQ (270 aa). Residues 18-25, 86-90, and 140-143 each bind GTP; these read SHPDAGKT, DTPGH, and NKLD.

The protein belongs to the TRAFAC class translation factor GTPase superfamily. Classic translation factor GTPase family. PrfC subfamily.

Its subcellular location is the cytoplasm. Its function is as follows. Increases the formation of ribosomal termination complexes and stimulates activities of RF-1 and RF-2. It binds guanine nucleotides and has strong preference for UGA stop codons. It may interact directly with the ribosome. The stimulation of RF-1 and RF-2 is significantly reduced by GTP and GDP, but not by GMP. This chain is Peptide chain release factor 3, found in Haemophilus influenzae (strain 86-028NP).